The primary structure comprises 167 residues: Seroin (167 aa).

Positions 1–17 (MATKILIFLSFVALSSA) are cleaved as a signal peptide. Residue Asn-26 is glycosylated (N-linked (GlcNAc...) asparagine). 5 tandem repeats follow at residues 38–46 (PPLPQPPPL), 56–64 (PPLPQPPPL), 76–78 (PPI), 79–81 (PPI), and 82–84 (PPI). Residues 145–167 (VNETIVGDNPPKFEESRKESSSN) are disordered. N-linked (GlcNAc...) asparagine glycosylation is present at Asn-146. Basic and acidic residues predominate over residues 155–167 (PKFEESRKESSSN).

Produced by both the posterior (PSG) and middle (MSG) sections of silk glands.

The protein resides in the secreted. The polypeptide is Seroin (Galleria mellonella (Greater wax moth)).